The primary structure comprises 512 residues: Cytochrome P450 monooxygenase astB (512 aa).

A helical membrane pass occupies residues 5–25 (DLSFPAAIGAVFGAVAISVAA). Cys-452 is a heme binding site.

The protein belongs to the cytochrome P450 family. It depends on heme as a cofactor.

It localises to the membrane. It participates in secondary metabolite biosynthesis; terpenoid biosynthesis. Cytochrome P450 monooxygenase; part of the gene cluster that mediates the biosynthesis of the sesquiterpenoid aspterric acid (AA), an inhibitor of dihydroxy-acid dehydratase (DHAD) effective as an herbicide. AstB catalyzes the second step within the pathway and converts (-)-daucane produced by the terpene cyclase astA into an alpha-epoxy carboxylate intermediate which is further converted into the tricyclic aspterric acid by the cytochrome P450 monooxygenase astC. In Aspergillus terreus (strain NIH 2624 / FGSC A1156), this protein is Cytochrome P450 monooxygenase astB.